The chain runs to 403 residues: Acetate kinase (403 aa).

Asn9 is a binding site for Mg(2+). Residue Lys16 coordinates ATP. Arg93 serves as a coordination point for substrate. Residue Asp150 is the Proton donor/acceptor of the active site. ATP contacts are provided by residues 210 to 214 (HLGNG), 284 to 286 (DFR), and 332 to 336 (GVGEN). Glu388 is a Mg(2+) binding site.

It belongs to the acetokinase family. Homodimer. The cofactor is Mg(2+). Mn(2+) is required as a cofactor.

Its subcellular location is the cytoplasm. It catalyses the reaction acetate + ATP = acetyl phosphate + ADP. It participates in metabolic intermediate biosynthesis; acetyl-CoA biosynthesis; acetyl-CoA from acetate: step 1/2. Functionally, catalyzes the formation of acetyl phosphate from acetate and ATP. Can also catalyze the reverse reaction. This is Acetate kinase from Corynebacterium jeikeium (strain K411).